A 181-amino-acid chain; its full sequence is Lysozyme C (181 aa).

The signal sequence occupies residues 1 to 19 (MRIAFFLLILSIIVGLAYG). Residues 139–181 (LTDSRPLGPFNVTEEEMDQLFIDHEIAMAQCEAEKTCNGFDLE) constitute a propeptide that is removed on maturation.

Belongs to the dictyostelium lysozyme family. In terms of processing, contains six disulfide bonds.

Its subcellular location is the cytoplasmic vesicle lumen. The catalysed reaction is Hydrolysis of (1-&gt;4)-beta-linkages between N-acetylmuramic acid and N-acetyl-D-glucosamine residues in a peptidoglycan and between N-acetyl-D-glucosamine residues in chitodextrins.. Functionally, has antibacterial activity. In Dictyostelium discoideum (Social amoeba), this protein is Lysozyme C (alyC).